Here is a 778-residue protein sequence, read N- to C-terminus: Endonuclease MutS2 (778 aa).

ATP is bound at residue 328 to 335; the sequence is GPNTGGKT. In terms of domain architecture, Smr spans 702–777; it reads LDLRGKRYEE…GSGATIVTFK (76 aa).

Belongs to the DNA mismatch repair MutS family. MutS2 subfamily. In terms of assembly, homodimer. Binds to stalled ribosomes, contacting rRNA.

Its function is as follows. Endonuclease that is involved in the suppression of homologous recombination and thus may have a key role in the control of bacterial genetic diversity. Acts as a ribosome collision sensor, splitting the ribosome into its 2 subunits. Detects stalled/collided 70S ribosomes which it binds and splits by an ATP-hydrolysis driven conformational change. Acts upstream of the ribosome quality control system (RQC), a ribosome-associated complex that mediates the extraction of incompletely synthesized nascent chains from stalled ribosomes and their subsequent degradation. Probably generates substrates for RQC. The protein is Endonuclease MutS2 of Streptococcus pneumoniae (strain 70585).